Here is a 555-residue protein sequence, read N- to C-terminus: Probable beta-glucosidase btgE (555 aa).

A signal peptide spans 1–18 (MRGAILATAAAFAGTAVA). Disordered stretches follow at residues 92 to 114 (TSSA…VTLP) and 263 to 290 (TTSA…PTGA). Low complexity predominate over residues 263–288 (TTSAASTTTAVPSSSTTTSSATSVPT). The active-site Proton donor is the E392. E488 serves as the catalytic Nucleophile.

The protein belongs to the glycosyl hydrolase 17 family.

It is found in the secreted. The protein localises to the cell wall. It catalyses the reaction Hydrolysis of terminal, non-reducing beta-D-glucosyl residues with release of beta-D-glucose.. It functions in the pathway glycan metabolism; cellulose degradation. In terms of biological role, beta-glucosidases are one of a number of cellulolytic enzymes involved in the degradation of cellulosic biomass. Catalyzes the last step releasing glucose from the inhibitory cellobiose. This is Probable beta-glucosidase btgE (btgE) from Emericella nidulans (strain FGSC A4 / ATCC 38163 / CBS 112.46 / NRRL 194 / M139) (Aspergillus nidulans).